A 344-amino-acid polypeptide reads, in one-letter code: Selenide, water dikinase (344 aa).

Residue Cys-16 is part of the active site. Residues Lys-19 and 47–49 (SRD) contribute to the ATP site. Asp-50 contacts Mg(2+). ATP-binding positions include Asp-67, Asp-90, and 138–140 (GHS). A Mg(2+)-binding site is contributed by Asp-90. Asp-226 serves as a coordination point for Mg(2+).

It belongs to the selenophosphate synthase 1 family. Class I subfamily. Homodimer. Mg(2+) is required as a cofactor.

The enzyme catalyses hydrogenselenide + ATP + H2O = selenophosphate + AMP + phosphate + 2 H(+). Synthesizes selenophosphate from selenide and ATP. In Pseudomonas putida (strain ATCC 47054 / DSM 6125 / CFBP 8728 / NCIMB 11950 / KT2440), this protein is Selenide, water dikinase.